The following is a 908-amino-acid chain: NADH-quinone oxidoreductase subunit G (908 aa).

The 2Fe-2S ferredoxin-type domain maps to 2–83 (ATIHVDGKEY…GTFISIDDEE (82 aa)). [2Fe-2S] cluster-binding residues include Cys34, Cys45, Cys48, and Cys67. In terms of domain architecture, 4Fe-4S His(Cys)3-ligated-type spans 83-122 (EAKQFRESVVEWLMTNHPHDCPVCEEGGNCHLQDMTVMTG). [4Fe-4S] cluster contacts are provided by His99, Cys103, Cys106, Cys112, Cys151, Cys154, Cys157, Cys201, Cys228, Cys231, Cys235, and Cys263. The 4Fe-4S Mo/W bis-MGD-type domain maps to 221–277 (MQFAPSICQQCSIGCNISPGERYGELRRIENRYNGTVNHYFLCDRGRFGYGYVNLKD).

Belongs to the complex I 75 kDa subunit family. Composed of 13 different subunits. Subunits NuoCD, E, F, and G constitute the peripheral sector of the complex. [2Fe-2S] cluster serves as cofactor. [4Fe-4S] cluster is required as a cofactor.

It is found in the cytoplasm. The protein resides in the cell inner membrane. It catalyses the reaction a quinone + NADH + 5 H(+)(in) = a quinol + NAD(+) + 4 H(+)(out). Its function is as follows. NDH-1 shuttles electrons from NADH, via FMN and iron-sulfur (Fe-S) centers, to quinones in the respiratory chain. The immediate electron acceptor for the enzyme in this species is believed to be ubiquinone. Couples the redox reaction to proton translocation (for every two electrons transferred, four hydrogen ions are translocated across the cytoplasmic membrane), and thus conserves the redox energy in a proton gradient. The protein is NADH-quinone oxidoreductase subunit G (nuoG) of Escherichia coli (strain K12).